The following is a 466-amino-acid chain: MSITSVASVFKGDFAIGSQITVRGWVRSRRDSKAGISFLAVYDGSCFDPIQGVVPNNLENYTNEVLKLTAGCSVVMTGEVVESPGQGQAFEMQVTKVEVAGLVEDPDTYPMAAKRHSIEHLRELAHLRPRTNIIGAVARVRNCLSQAIHRFYNEQGYIWVSTPLITASDTEGAGEMFRVSTLDLENLPRTDKGTVDYAEDFFGKESFLTVSGQLNAETYACALSKVYTFGPTFRAENSNTSRHLAEFWMVEPEVAFANLDDAAKLAEDMLKYCFKAVLEERRDDLEFFAQRVEKTAIERLENFVTSDFAQIDYTDAIEILKACDKDFEYDVEWGIDLHSEHERYLAEEHFKAPVVVKNYPKDIKAFYMRLNDDGKTVAAMDVLAPGIGEIIGGAQREERLDVLDARLAEMELSQEDYWWYRDLRRYGTVPHAGFGLGFERLVSYVTGVSNIRDVIPFPRSPKSANF.

This sequence belongs to the class-II aminoacyl-tRNA synthetase family. In terms of assembly, homodimer.

Its subcellular location is the cytoplasm. The catalysed reaction is tRNA(Asn) + L-asparagine + ATP = L-asparaginyl-tRNA(Asn) + AMP + diphosphate + H(+). This chain is Asparagine--tRNA ligase, found in Shewanella pealeana (strain ATCC 700345 / ANG-SQ1).